The primary structure comprises 396 residues: Cysteine desulfurase (396 aa).

Pyridoxal 5'-phosphate contacts are provided by residues 71 to 72 (GT), N148, Q176, and 196 to 198 (SGH). N6-(pyridoxal phosphate)lysine is present on K199. T231 provides a ligand contact to pyridoxal 5'-phosphate. C319 serves as the catalytic Cysteine persulfide intermediate. C319 is a binding site for [2Fe-2S] cluster.

It belongs to the class-V pyridoxal-phosphate-dependent aminotransferase family. NifS/IscS subfamily. In terms of assembly, homodimer. Pyridoxal 5'-phosphate serves as cofactor.

The enzyme catalyses (sulfur carrier)-H + L-cysteine = (sulfur carrier)-SH + L-alanine. Catalyzes the removal of elemental sulfur atoms from cysteine to produce alanine. Seems to participate in the biosynthesis of the nitrogenase metalloclusters by providing the inorganic sulfur required for the Fe-S core formation. This chain is Cysteine desulfurase, found in Azotobacter chroococcum mcd 1.